The chain runs to 371 residues: Anhydro-N-acetylmuramic acid kinase (371 aa).

Position 12–19 (12–19) interacts with ATP; that stretch reads GTSADGID.

The protein belongs to the anhydro-N-acetylmuramic acid kinase family.

It carries out the reaction 1,6-anhydro-N-acetyl-beta-muramate + ATP + H2O = N-acetyl-D-muramate 6-phosphate + ADP + H(+). Its pathway is amino-sugar metabolism; 1,6-anhydro-N-acetylmuramate degradation. The protein operates within cell wall biogenesis; peptidoglycan recycling. Its function is as follows. Catalyzes the specific phosphorylation of 1,6-anhydro-N-acetylmuramic acid (anhMurNAc) with the simultaneous cleavage of the 1,6-anhydro ring, generating MurNAc-6-P. Is required for the utilization of anhMurNAc either imported from the medium or derived from its own cell wall murein, and thus plays a role in cell wall recycling. The sequence is that of Anhydro-N-acetylmuramic acid kinase from Saccharophagus degradans (strain 2-40 / ATCC 43961 / DSM 17024).